Consider the following 820-residue polypeptide: MTHKLTPMMQQWHQCKEQAGDCLLLFRLGEFYEAFFDDALILAQNLDITLTQRQNVPMSGIPATCLDGYVDRLVSRGFKVAIAEQADNTEGSKGLVPRTINRLITPGALLSSSLLPEKANNYVLAINQVGSLYGLSCLDLSIGTFLVAEYDNTKDLIEAICRLAPTELLSHAKFYQKNAAVIKQLQQHLRITLSEYVSWAFEYQSATKKLYTCFQVSSLDGFGLQGLVPAINAAGALLSYIQDKLLLPISHLSIPKIYGQQKHLLIDKASQTNLELLSPIHGEHGKGSLLQVMERTSTPMGGRLLRNTLINPFYDLKEITLRQDSVEFFLQQEDLRKILKRQLSCVRDLERLATKISTSLATPKDIGTLRDSLLSCTHIADNLQNCALPEFLENKFLIAPPLCSLIKTLSTELIQELPLKVSEGNIFANHYHPDLLRLRNIKENSKSWILEYQERIRNETGIKKLKVCYAQALGYYIEVASNLAPQLPKEFIRRQSRLHAERFTTQELQQFQDEVFSVEDKLQTLETKLFKELCFYIVEHRDLILKLSTAVADLDYVVSLAELAAEYDYRRPLVDHSDALSITKGMHPVALTLLDKGTFIPNDTVMHSAQTRMILLTGPNMAGKSTYIRQIALLVIMAQMGSFIPARSAHIGIVDKIFTRIGAGDNLSKGMSTFMVEMAETANILHNATDRSLVILDEIGRGTSTYDGLAIAQAVVEFLLFTDGKKAKTLFATHYKELTELEMHCQHVENFHAMVKENSGQPIFMYEIVKGHSKKSFGIHVAKLAGFPLSVVSRAQQILHQFEGPDLRPEPEKAQQLVMF.

618 to 625 is a binding site for ATP; the sequence is GPNMAGKS.

It belongs to the DNA mismatch repair MutS family.

Its function is as follows. This protein is involved in the repair of mismatches in DNA. It is possible that it carries out the mismatch recognition step. This protein has a weak ATPase activity. The sequence is that of DNA mismatch repair protein MutS from Chlamydia trachomatis serovar L2b (strain UCH-1/proctitis).